We begin with the raw amino-acid sequence, 275 residues long: WIMGHMVNEIYQIDEFVDLGANSIETDITFDDDAMAEYSYHGVPCDCMRWCHKWEYVNDFLEGLRRATTPGDSKYRKQLILVVFDLKTGDLSSSTAYKGGKLFAEKLLRYYWNGGSNGGRAYIIISIPDIDHYAFISGFRDALKKSGHEDLLAKVGYDFSGNDDLNSIRGALHKAGVKDREHVWQSDGITNCLLRSLDRVNEAVKNRDSSNGYISKMYYWTIEKYATVRDALNAEVDGIMTNYPDVIVNVLNEDSFKNRFRMATFDDNPWELFKR.

His5 is a catalytic residue. Mg(2+)-binding residues include Glu25 and Asp27. Residue His41 is the Nucleophile of the active site. Disulfide bonds link Cys45-Cys51 and Cys47-Cys192. Residue Asp85 participates in Mg(2+) binding.

The protein belongs to the arthropod phospholipase D family. Class II subfamily. It depends on Mg(2+) as a cofactor. In terms of tissue distribution, expressed by the venom gland.

It localises to the secreted. The enzyme catalyses an N-(acyl)-sphingosylphosphocholine = an N-(acyl)-sphingosyl-1,3-cyclic phosphate + choline. It catalyses the reaction an N-(acyl)-sphingosylphosphoethanolamine = an N-(acyl)-sphingosyl-1,3-cyclic phosphate + ethanolamine. It carries out the reaction a 1-acyl-sn-glycero-3-phosphocholine = a 1-acyl-sn-glycero-2,3-cyclic phosphate + choline. The catalysed reaction is a 1-acyl-sn-glycero-3-phosphoethanolamine = a 1-acyl-sn-glycero-2,3-cyclic phosphate + ethanolamine. In terms of biological role, dermonecrotic toxins cleave the phosphodiester linkage between the phosphate and headgroup of certain phospholipids (sphingolipid and lysolipid substrates), forming an alcohol (often choline) and a cyclic phosphate. This toxin acts on sphingomyelin (SM). It may also act on ceramide phosphoethanolamine (CPE), lysophosphatidylcholine (LPC) and lysophosphatidylethanolamine (LPE), but not on lysophosphatidylserine (LPS), and lysophosphatidylglycerol (LPG). It acts by transphosphatidylation, releasing exclusively cyclic phosphate products as second products. Induces dermonecrosis, hemolysis, increased vascular permeability, edema, inflammatory response, and platelet aggregation. This chain is Dermonecrotic toxin LamSicTox-alphaIV1ii, found in Loxosceles amazonica (Recluse spider).